The sequence spans 385 residues: Digeranylgeranylglycerophospholipid reductase 2 (385 aa).

FAD contacts are provided by alanine 13, glutamate 32, cysteine 43, alanine 44, glycine 46, arginine 95, alanine 119, aspartate 273, glycine 285, and isoleucine 286.

It belongs to the geranylgeranyl reductase family. DGGGPL reductase subfamily. It depends on FAD as a cofactor.

The enzyme catalyses a 2,3-bis-O-phytanyl-sn-glycerol 1-phospholipid + 8 A = a 2,3-bis-O-(geranylgeranyl)-sn-glycerol 1-phospholipid + 8 AH2. It catalyses the reaction 2,3-bis-O-(phytanyl)-sn-glycerol 1-phosphate + 8 A = 2,3-bis-O-(geranylgeranyl)-sn-glycerol 1-phosphate + 8 AH2. It carries out the reaction CDP-2,3-bis-O-(geranylgeranyl)-sn-glycerol + 8 AH2 = CDP-2,3-bis-O-(phytanyl)-sn-glycerol + 8 A. The catalysed reaction is archaetidylserine + 8 AH2 = 2,3-bis-O-phytanyl-sn-glycero-3-phospho-L-serine + 8 A. The protein operates within membrane lipid metabolism; glycerophospholipid metabolism. Functionally, is involved in the reduction of 2,3-digeranylgeranylglycerophospholipids (unsaturated archaeols) into 2,3-diphytanylglycerophospholipids (saturated archaeols) in the biosynthesis of archaeal membrane lipids. Catalyzes the formation of archaetidic acid (2,3-di-O-phytanyl-sn-glyceryl phosphate) from 2,3-di-O-geranylgeranylglyceryl phosphate (DGGGP) via the hydrogenation of each double bond of the isoprenoid chains. Is also probably able to reduce double bonds of geranyl groups in CDP-2,3-bis-O-(geranylgeranyl)-sn-glycerol and archaetidylserine, thus acting at various stages in the biosynthesis of archaeal membrane lipids. In Methanothermobacter thermautotrophicus (strain ATCC 29096 / DSM 1053 / JCM 10044 / NBRC 100330 / Delta H) (Methanobacterium thermoautotrophicum), this protein is Digeranylgeranylglycerophospholipid reductase 2.